We begin with the raw amino-acid sequence, 245 residues long: Precorrin-2 C(20)-methyltransferase (245 aa).

Belongs to the precorrin methyltransferase family. Homodimer.

It carries out the reaction precorrin-2 + S-adenosyl-L-methionine = precorrin-3A + S-adenosyl-L-homocysteine + H(+). It participates in cofactor biosynthesis; adenosylcobalamin biosynthesis; cob(II)yrinate a,c-diamide from precorrin-2 (aerobic route): step 1/10. Methylates precorrin-2 at the C-20 position to produce precorrin-3A. This Sinorhizobium sp protein is Precorrin-2 C(20)-methyltransferase (cobI).